We begin with the raw amino-acid sequence, 137 residues long: Protein phosphatase 1 regulatory subunit 1B (137 aa).

The segment at 1-137 (DPKDRKKIQF…EEEEEEEDSQ (137 aa)) is disordered. At Thr33 the chain carries Phosphothreonine; by PKA. Over residues 40–62 (LXEHSSPEEEASPHQRAAGEGHH) the composition is skewed to basic and acidic residues. A phosphoserine mark is found at Ser44 and Ser45. A Phosphothreonine; by CDK5 modification is found at Thr74. Residues 88–99 (HLQSISNLGENQ) are compositionally biased toward polar residues. Ser101 carries the post-translational modification Phosphoserine. Residues 108–117 (GELRELGYPR) show a composition bias toward basic and acidic residues. A compositionally biased stretch (acidic residues) spans 118–137 (EEEEEEEEDDEEEEEEEDSQ). Ser136 is modified (phosphoserine).

Belongs to the protein phosphatase inhibitor 1 family. Phosphorylation of Thr-33 is required for activity. In terms of processing, dopamine- and cyclic AMP-regulated neuronal phosphoprotein.

It is found in the cytoplasm. In terms of biological role, inhibitor of protein-phosphatase 1. The chain is Protein phosphatase 1 regulatory subunit 1B (PPP1R1B) from Sus scrofa (Pig).